A 122-amino-acid chain; its full sequence is Large ribosomal subunit protein bL12 (122 aa).

This sequence belongs to the bacterial ribosomal protein bL12 family. Homodimer. Part of the ribosomal stalk of the 50S ribosomal subunit. Forms a multimeric L10(L12)X complex, where L10 forms an elongated spine to which 2 to 4 L12 dimers bind in a sequential fashion. Binds GTP-bound translation factors.

Forms part of the ribosomal stalk which helps the ribosome interact with GTP-bound translation factors. Is thus essential for accurate translation. This chain is Large ribosomal subunit protein bL12, found in Xylella fastidiosa (strain M12).